We begin with the raw amino-acid sequence, 60 residues long: Cytotoxin 7 (60 aa).

Intrachain disulfides connect Cys-3–Cys-21, Cys-14–Cys-38, Cys-42–Cys-53, and Cys-54–Cys-59.

This sequence belongs to the three-finger toxin family. Short-chain subfamily. Type IA cytotoxin sub-subfamily. In terms of assembly, monomer in solution; Homodimer and oligomer in the presence of negatively charged lipids forming a pore with a size ranging between 20 and 30 Angstroms. As to expression, expressed by the venom gland.

It is found in the secreted. The protein resides in the target cell membrane. In terms of biological role, shows cytolytic activity on many different cells by forming pore in lipid membranes. In vivo, increases heart rate or kills the animal by cardiac arrest. In addition, it binds to heparin with high affinity, interacts with Kv channel-interacting protein 1 (KCNIP1) in a calcium-independent manner, and binds to integrin alpha-V/beta-3 (ITGAV/ITGB3) with moderate affinity. This chain is Cytotoxin 7, found in Naja annulifera (Banded Egyptian cobra).